We begin with the raw amino-acid sequence, 287 residues long: ATP synthase gamma chain (287 aa).

This sequence belongs to the ATPase gamma chain family. F-type ATPases have 2 components, CF(1) - the catalytic core - and CF(0) - the membrane proton channel. CF(1) has five subunits: alpha(3), beta(3), gamma(1), delta(1), epsilon(1). CF(0) has three main subunits: a, b and c.

It localises to the cell inner membrane. Produces ATP from ADP in the presence of a proton gradient across the membrane. The gamma chain is believed to be important in regulating ATPase activity and the flow of protons through the CF(0) complex. This Yersinia pestis protein is ATP synthase gamma chain.